The chain runs to 473 residues: MGRTLYDKIWDEHVVHTEEDGTSILYIDRHLVHEVTSPQAFEGLREAGRKVWRISSIVATADHNTPTTGWELGYDGITDLVSKEQITTLDANIKEFGAAAFFPFLSKRQGIVHVIGPESGATLPGMTVVCGDSHTSTHGAFGALAHGIGTSEVEHVMATQTLLAKKAKNLLIKVEGTLPKGCTAKDIVLAIIGKIGTAGGTGYTIEFAGSAIRALSMEGRMTVCNMAIEGGARAGLVAVDQKTIDYVKGRLLAPTGVEWDQAVQYWATLHSDADAKFDAVVELDASQILPQVTWGTSPEMVLSIEDRVPDPDKEKDANKRGAIERALTYMGLQPGKALNDLYVDKVFIGSCTNSRIEDMREAAAIVKKLGQKVAKNVKLAMVVPGSGLVKEQAEREGLDKIFVAAGFEWREPGCSMCLAMNADRLEPGERCASTSNRNFEGRQGAGGRTHLVSPAMAAAAAVHGHFVDVRKFV.

3 residues coordinate [4Fe-4S] cluster: C351, C414, and C417.

The protein belongs to the aconitase/IPM isomerase family. LeuC type 1 subfamily. As to quaternary structure, heterodimer of LeuC and LeuD. [4Fe-4S] cluster serves as cofactor.

The enzyme catalyses (2R,3S)-3-isopropylmalate = (2S)-2-isopropylmalate. It participates in amino-acid biosynthesis; L-leucine biosynthesis; L-leucine from 3-methyl-2-oxobutanoate: step 2/4. Its function is as follows. Catalyzes the isomerization between 2-isopropylmalate and 3-isopropylmalate, via the formation of 2-isopropylmaleate. This Polaromonas sp. (strain JS666 / ATCC BAA-500) protein is 3-isopropylmalate dehydratase large subunit.